The chain runs to 140 residues: uncharacterized protein (140 aa).

N36 carries N-linked (GlcNAc...) asparagine glycosylation. A helical membrane pass occupies residues 91–107 (LFMSLIGLCVCYMNLVF). A compositionally biased stretch (polar residues) spans 113 to 122 (QPSSSGSKGN). The disordered stretch occupies residues 113-140 (QPSSSGSKGNTETTIETTTEVETETAKQ). Residues 131 to 140 (TEVETETAKQ) are compositionally biased toward acidic residues.

Its subcellular location is the endoplasmic reticulum membrane. This is an uncharacterized protein from Saccharomyces cerevisiae (strain ATCC 204508 / S288c) (Baker's yeast).